Here is a 200-residue protein sequence, read N- to C-terminus: Beta-1,6-glucan synthesis-associated protein KEG1 (200 aa).

Residues 1-15 (MAGIKLTHKLYQYYQ) lie on the Lumenal side of the membrane. Residues 16 to 36 (LATSFLYAALLIRWLILMPLV) form a helical membrane-spanning segment. The Cytoplasmic segment spans residues 37–44 (GSRFLPGG). A helical membrane pass occupies residues 45–65 (IHEFLIYLMFYSSIMEVIWLL). Topologically, residues 66-82 (RFHGFKYGLLSRTFLKD) are lumenal. Residues 83–103 (LNFIYLVSVIHFYDDYEHALI) traverse the membrane as a helical segment. The Cytoplasmic portion of the chain corresponds to 104 to 145 (LKNASYSSFIISLSLSQAYCHWCKLFKRKGVKERTLVWKVNT). The helical transmembrane segment at 146–166 (FVTLPILYLSEFALLLLNIQV) threads the bilayer. At 167 to 173 (KNYHSTP) the chain is on the lumenal side. Residues 174–194 (TLDIINRVVLLAYFPVLLTAY) form a helical membrane-spanning segment. Residues 195 to 200 (KKLLTK) are Cytoplasmic-facing.

As to quaternary structure, interacts with KRE6.

The protein localises to the endoplasmic reticulum membrane. Its function is as follows. Involved in the biosynthesis of (1-&gt;6)-beta-D-glucan polymers of the cell wall. Required for viability. Involved in maintaining chromosome stability. This chain is Beta-1,6-glucan synthesis-associated protein KEG1 (KEG1), found in Saccharomyces cerevisiae (strain ATCC 204508 / S288c) (Baker's yeast).